The primary structure comprises 211 residues: Superoxide dismutase [Mn], mitochondrial (211 aa).

A mitochondrion-targeting transit peptide spans 1 to 24 (MLCRAVCSASRRLAPALGILGVRQ). H50 is a binding site for Mn(2+). Y58 is subject to 3'-nitrotyrosine. 2 positions are modified to N6-acetyllysine; alternate: K68 and K75. Residues K68 and K75 each carry the N6-succinyllysine; alternate modification. Residue H98 participates in Mn(2+) binding. Residue K114 is modified to N6-acetyllysine. N6-acetyllysine; alternate occurs at positions 122 and 130. An N6-succinyllysine; alternate mark is found at K122 and K130. Mn(2+)-binding residues include D183 and H187. Position 202 is an N6-acetyllysine (K202).

This sequence belongs to the iron/manganese superoxide dismutase family. In terms of assembly, homotetramer. It depends on Mn(2+) as a cofactor. Nitrated under oxidative stress. Nitration coupled with oxidation inhibits the catalytic activity. In terms of processing, acetylation at Lys-122 decreases enzymatic activity. Deacetylated by SIRT3 upon exposure to ionizing radiations or after long fasting. Post-translationally, polyubiquitinated; leading to proteasomal degradation. Deubiquitinated by USP36 which increases protein stability.

The protein localises to the mitochondrion matrix. It catalyses the reaction 2 superoxide + 2 H(+) = H2O2 + O2. Its function is as follows. Destroys superoxide anion radicals which are normally produced within the cells and which are toxic to biological systems. This is Superoxide dismutase [Mn], mitochondrial (SOD2) from Cavia porcellus (Guinea pig).